A 570-amino-acid polypeptide reads, in one-letter code: Conserved oligomeric Golgi complex subunit 8 (570 aa).

This sequence belongs to the COG8 family. As to quaternary structure, component of the conserved oligomeric Golgi complex which is composed of eight different subunits and is required for normal Golgi morphology and localization.

It is found in the golgi apparatus membrane. Functionally, required for normal Golgi function. The chain is Conserved oligomeric Golgi complex subunit 8 from Drosophila melanogaster (Fruit fly).